The chain runs to 1091 residues: Sodium/potassium exporting P-type ATPase 1 (1091 aa).

Topologically, residues 1–63 are cytoplasmic; that stretch reads MGEGTTKENN…LGDDTKIDYK (63 aa). Residues 64-84 form a helical membrane-spanning segment; the sequence is AMVLHQVCNAMIMVLLISMII. The Extracellular segment spans residues 85-90; sequence SFAMHD. Residues 91–111 form a helical membrane-spanning segment; sequence WITGGVISFVIAVNVLIGLVQ. Residues 112–282 are Cytoplasmic-facing; sequence EYKATKTMNS…TNVGTPLHRK (171 aa). Residues 283–303 form a helical membrane-spanning segment; the sequence is LSKLAVLLFWIAVLFAIIVMA. Over 304-312 the chain is Extracellular; sequence SQKFDVDKR. A helical transmembrane segment spans residues 313–333; that stretch reads VAIYAICVALSMIPSSLVVVL. Residues 334–815 lie on the Cytoplasmic side of the membrane; it reads TITMSVGAAV…RRMTDNIQKF (482 aa). Aspartate 369 acts as the 4-aspartylphosphate intermediate in catalysis. The Mg(2+) site is built by aspartate 369 and threonine 371. ATP contacts are provided by threonine 371 and glutamate 483. Residues 499 to 525 form a disordered region; the sequence is ALTGEKSTNQSNENDQSSLSQHNEKPG. The span at 503-519 shows a compositional bias: polar residues; the sequence is EKSTNQSNENDQSSLSQ. ATP-binding residues include lysine 561, arginine 606, threonine 673, glycine 674, aspartate 675, arginine 732, and lysine 738. Residue aspartate 757 coordinates Mg(2+). Asparagine 760 lines the ATP pocket. The helical transmembrane segment at 816-836 threads the bilayer; sequence VLQLLAENVAQALYLIIGLVF. Topologically, residues 837 to 848 are extracellular; that stretch reads RDENGKSVFPLS. The helical transmembrane segment at 849-869 threads the bilayer; sequence PVEVLWIIVVTSCFPAMGLGL. Topologically, residues 870 to 885 are cytoplasmic; the sequence is EKAAPDLMDRPPHDSE. Residues 886–906 form a helical membrane-spanning segment; that stretch reads VGIFTWEVIIDTFAYGIIMTG. At 907-943 the chain is on the extracellular side; the sequence is SCMASFTGSLYGINSGRLGHDCDGTYNSSCRDVYRSR. The helical transmembrane segment at 944-964 threads the bilayer; it reads SAAFATMTWCALILAWEVVDM. The Cytoplasmic segment spans residues 965–991; it reads RRSFFRMHPDTDSPVKEFFRSIWGNQF. Residues 992-1012 form a helical membrane-spanning segment; sequence LFWSIIFGFVSAFPVVYIPVI. Residues 1013–1021 lie on the Extracellular side of the membrane; that stretch reads NDKVFLHKP. A helical membrane pass occupies residues 1022-1042; the sequence is IGAEWGLAIAFTIAFWIGAEL. Over 1043 to 1091 the chain is Cytoplasmic; sequence YKCGKRRYFKTQRAHNPENDLESNNKRDPFEAYSTSTTIHTEVNIGIKQ.

The protein belongs to the cation transport ATPase (P-type) (TC 3.A.3) family. Type IID subfamily. It depends on Mg(2+) as a cofactor. The active site is phosphorylated in presence of sodium or potassium and in conditions of higher pH. Not phosphorylated in presence of calcium ions.

Its subcellular location is the cell membrane. The catalysed reaction is Na(+)(in) + ATP + H2O = Na(+)(out) + ADP + phosphate + H(+). It carries out the reaction K(+)(in) + ATP + H2O = K(+)(out) + ADP + phosphate + H(+). Functionally, catalyzes the hydrolysis of ATP coupled with the export of sodium and potassium from the cell. May export potassium less efficiently. May transport other cations such as lithium. Sodium/potassium efflux ATPases are involved in salt tolerance and maintaining the membrane potential across the plasma membrane in high salinity (Na+) or alkaline (K+) environments. Is negatively modulated by SIS2/HAL3. The chain is Sodium/potassium exporting P-type ATPase 1 from Saccharomyces cerevisiae (strain ATCC 204508 / S288c) (Baker's yeast).